A 940-amino-acid polypeptide reads, in one-letter code: Fibronectin-binding protein B (940 aa).

A signal peptide spans 1-36; it reads MKSNLRYGIRKHKLGAASVFLGTMIVVGMGQEKEAA. The interval 36 to 111 is disordered; sequence AASEQNNTTV…PKVETSRVDL (76 aa). Positions 38-92 are enriched in polar residues; the sequence is SEQNNTTVEESGSSATESKASETQTTTNNVNTIDETQSYSATSTEQPSQSTQVTT. The interval 162 to 480 is fibrinogen/elastin/tropoelastin-binding; sequence TGTDVTNKVE…AQGDGKDKLK (319 aa). Disordered regions lie at residues 676 to 746, 764 to 878, and 892 to 918; these read LGYE…NIID, IIEE…GKVV, and VPTKKAQSKKSELPETGGEESTNNGML. The D-1 repeat unit spans residues 681–718; sequence GQNSGNQSFEEDTEEDKPKYEQGGNIVDIDFDSVPQIH. The stretch at 719-756 is one D-2 repeat; the sequence is GQNNGNQSFEEDTEKDKPKYEQGGNIIDIDFDSVPHIH. The stretch at 757-795 is one D-3 repeat; it reads GFNKHTEIIEEDTNKDKPNYQFGGHNSVDFEEDTLPQVS. The span at 764–774 shows a compositional bias: basic and acidic residues; the sequence is IIEEDTNKDKP. Positions 792-802 are enriched in polar residues; sequence PQVSGHNEGQQ. Residues 796 to 814 form a D-4; truncated repeat; that stretch reads GHNEGQQTIEEDTTPPIVP. A compositionally biased stretch (pro residues) spans 811-860; that stretch reads PIVPPTPPTPEVPSEPETPTPPTPEVPSEPETPTPPTPEVPTEPGKPIPP. WR repeat units lie at residues 815 to 828, 829 to 842, and 857 to 870; these read PTPPTPEVPSEPET and PIPPAKEEPKKPSK. The LPXTG sorting signal signature appears at 904 to 908; it reads LPETG. A Pentaglycyl murein peptidoglycan amidated threonine modification is found at Thr-907. Residues 908 to 940 constitute a propeptide, removed by sortase; that stretch reads GGEESTNNGMLFGGLFSILGLALLRRNKKNHKA.

In terms of assembly, interacts with host PLG; this interaction provides active plasmin on the surface of bacteria cells. Interacts with host histones.

It is found in the secreted. The protein resides in the cell wall. In terms of biological role, multifunctional protein which promotes bacterial attachment to fibrinogen, elastin and fibronectin. Also promotes the accumulation phase and the primary attachment phase of biofilm formation. In addition, protects against the antimicrobial activity of histones. Mechanistically, captures histones and prevents them from reaching the bacterial membrane and simultaneously binds plasminogen, thereby promoting its conversion to plasmin to destroy the bound histones. The chain is Fibronectin-binding protein B from Staphylococcus aureus (strain USA300).